The following is a 157-amino-acid chain: Arginine repressor (157 aa).

This sequence belongs to the ArgR family.

The protein resides in the cytoplasm. It participates in amino-acid biosynthesis; L-arginine biosynthesis [regulation]. Functionally, regulates arginine biosynthesis genes. The protein is Arginine repressor of Bacteroides thetaiotaomicron (strain ATCC 29148 / DSM 2079 / JCM 5827 / CCUG 10774 / NCTC 10582 / VPI-5482 / E50).